We begin with the raw amino-acid sequence, 142 residues long: Large ribosomal subunit protein uL13 (142 aa).

The protein belongs to the universal ribosomal protein uL13 family. In terms of assembly, part of the 50S ribosomal subunit.

This protein is one of the early assembly proteins of the 50S ribosomal subunit, although it is not seen to bind rRNA by itself. It is important during the early stages of 50S assembly. This Proteus mirabilis (strain HI4320) protein is Large ribosomal subunit protein uL13.